A 317-amino-acid polypeptide reads, in one-letter code: tRNA dimethylallyltransferase (317 aa).

Residue 19 to 26 (GPTASGKS) participates in ATP binding. 21–26 (TASGKS) is a substrate binding site. The interaction with substrate tRNA stretch occupies residues 49-52 (DSAQ).

Belongs to the IPP transferase family. In terms of assembly, monomer. Mg(2+) serves as cofactor.

The catalysed reaction is adenosine(37) in tRNA + dimethylallyl diphosphate = N(6)-dimethylallyladenosine(37) in tRNA + diphosphate. Catalyzes the transfer of a dimethylallyl group onto the adenine at position 37 in tRNAs that read codons beginning with uridine, leading to the formation of N6-(dimethylallyl)adenosine (i(6)A). The polypeptide is tRNA dimethylallyltransferase (Erythrobacter litoralis (strain HTCC2594)).